We begin with the raw amino-acid sequence, 550 residues long: Small ribosomal subunit protein uS3m (550 aa).

Residues 112–133 (NDDTEEERNEVGGRGAGKRVES) are disordered.

It belongs to the universal ribosomal protein uS3 family.

The protein localises to the mitochondrion. This Oenothera berteroana (Bertero's evening primrose) protein is Small ribosomal subunit protein uS3m (RPS3).